A 347-amino-acid polypeptide reads, in one-letter code: Dihydroorotase (347 aa).

Residues H17 and H19 each coordinate Zn(2+). Substrate contacts are provided by residues 19 to 21 (HLR) and N45. Zn(2+)-binding residues include K103, H140, and H178. K103 carries the N6-carboxylysine modification. H140 provides a ligand contact to substrate. L223 is a binding site for substrate. D251 is a binding site for Zn(2+). Residue D251 is part of the active site. Substrate is bound by residues H255 and A267.

Belongs to the metallo-dependent hydrolases superfamily. DHOase family. Class II DHOase subfamily. As to quaternary structure, homodimer. Zn(2+) is required as a cofactor.

It carries out the reaction (S)-dihydroorotate + H2O = N-carbamoyl-L-aspartate + H(+). It functions in the pathway pyrimidine metabolism; UMP biosynthesis via de novo pathway; (S)-dihydroorotate from bicarbonate: step 3/3. In terms of biological role, catalyzes the reversible cyclization of carbamoyl aspartate to dihydroorotate. The chain is Dihydroorotase from Pectobacterium carotovorum subsp. carotovorum (strain PC1).